The primary structure comprises 199 residues: Dephospho-CoA kinase (199 aa).

The DPCK domain occupies 4 to 199; the sequence is VIGLTGGIAS…DNVLQKWNIS (196 aa). 12 to 17 is a binding site for ATP; sequence ASGKST.

It belongs to the CoaE family.

The protein localises to the cytoplasm. The enzyme catalyses 3'-dephospho-CoA + ATP = ADP + CoA + H(+). The protein operates within cofactor biosynthesis; coenzyme A biosynthesis; CoA from (R)-pantothenate: step 5/5. Its function is as follows. Catalyzes the phosphorylation of the 3'-hydroxyl group of dephosphocoenzyme A to form coenzyme A. This chain is Dephospho-CoA kinase, found in Oceanobacillus iheyensis (strain DSM 14371 / CIP 107618 / JCM 11309 / KCTC 3954 / HTE831).